The chain runs to 413 residues: MHYYVLFTFLTLDLAPVALSLSTCSALDMDQFMRKRIEAIRGQILSKLKLNSPPEDYPEPGEVSQDVISIYNSTRDLLQEKANERATSCERERSEDEYYAKEVYKIDMLPYYTSENVIPPSYTTPYFRIVRFDVSSMEKNASNLVKAEFRVFRLMNTKARVSEQRIELYQILKSKDLASPTQRYIDSKVVKTRAEGEWLSFDVTEAVNEWLHHKDRNLGFKISLHCPCCTFIPSNNYIIPNKSEELETRFAGIDDAYMYAGGDSKSKTGRKKHTGRTPHLLLMLLPSYRLESQQSSRRKKRALDAAYCFRNVQDNCCLRPLYIDFKKDLGWKWIHEPKGYNANFCAGACPYLWSSDTQHSRVLSLYNTINPEASASPCCVSQDLDSLTILYYIGNKPKIEQLSNMIVKSCKCS.

The signal sequence occupies residues methionine 1 to leucine 19. Asparagine 72, asparagine 140, and asparagine 241 each carry an N-linked (GlcNAc...) asparagine glycan. Disulfide bonds link cysteine 308–cysteine 317, cysteine 316–cysteine 379, cysteine 345–cysteine 410, and cysteine 349–cysteine 412.

It belongs to the TGF-beta family. Interacts with Transforming growth factor beta-2 (TGF-beta-2) chain; interaction is non-covalent and maintains (TGF-beta-2) in a latent state. As to quaternary structure, homodimer; disulfide-linked. Interacts with TGF-beta receptors (tgfbr1 and tgfbr2), leading to signal transduction. Post-translationally, the precursor proprotein is cleaved in the Golgi apparatus to form Transforming growth factor beta-2 (TGF-beta-2) and Latency-associated peptide (LAP) chains, which remain non-covalently linked, rendering TGF-beta-2 inactive.

The protein resides in the secreted. It is found in the extracellular space. The protein localises to the extracellular matrix. In terms of biological role, precursor of the Latency-associated peptide (LAP) and Transforming growth factor beta-2 (TGF-beta-2) chains, which constitute the regulatory and active subunit of TGF-beta-2, respectively. Its function is as follows. Required to maintain the Transforming growth factor beta-2 (TGF-beta-2) chain in a latent state during storage in extracellular matrix. Associates non-covalently with TGF-beta-2 and regulates its activation via interaction with 'milieu molecules', such as ltbp1 and lrrc32/garp, that control activation of TGF-beta-2. Functionally, multifunctional protein that regulates various processes such as angiogenesis and heart development. Activation into mature form follows different steps: following cleavage of the proprotein in the Golgi apparatus, Latency-associated peptide (LAP) and Transforming growth factor beta-2 (TGF-beta-2) chains remain non-covalently linked rendering TGF-beta-2 inactive during storage in extracellular matrix. At the same time, LAP chain interacts with 'milieu molecules', such as ltbp1 and lrrc32/garp, that control activation of TGF-beta-2 and maintain it in a latent state during storage in extracellular milieus. Once activated following release of LAP, TGF-beta-2 acts by binding to TGF-beta receptors (tgfbr1 and tgfbr2), which transduce signal. This Xenopus laevis (African clawed frog) protein is Transforming growth factor beta-2 proprotein (tgfb2).